Here is a 336-residue protein sequence, read N- to C-terminus: HTH-type transcriptional repressor PurR (336 aa).

The 55-residue stretch at 2-56 (ATIKDVAKMAGVSTTTVSHVINKTRFVAKDTEEAVLSAIKQLNYSPSAVARSLKV) folds into the HTH lacI-type domain. Positions 4–23 (IKDVAKMAGVSTTTVSHVIN) form a DNA-binding region, H-T-H motif. Residues 48–56 (SAVARSLKV) mediate DNA binding. Positions 73, 188, 190, 219, and 273 each coordinate hypoxanthine.

Homodimer.

It participates in purine metabolism; purine nucleotide biosynthesis [regulation]. Its function is as follows. Is the main repressor of the genes involved in the de novo synthesis of purine nucleotides, regulating purB, purC, purEK, purF, purHD, purL, purMN and guaBA expression. PurR is allosterically activated to bind its cognate DNA by binding the purine corepressors, hypoxanthine or guanine, thereby effecting transcription repression. This Haemophilus influenzae (strain ATCC 51907 / DSM 11121 / KW20 / Rd) protein is HTH-type transcriptional repressor PurR.